Here is a 326-residue protein sequence, read N- to C-terminus: Putative ankyrin repeat protein L25 (326 aa).

ANK repeat units follow at residues 11-40 (RSEY…DLNV), 42-65 (KLFY…NIHV), 66-95 (DDEF…DIHV), 96-125 (NDDA…DIHA), 127-154 (NELV…DIHA), 155-184 (EDDE…NFRA), 185-214 (ENDY…DIHA), 216-244 (DEYA…DIHA), 246-274 (NDYG…NIHA), and 275-304 (KDDY…NIHA).

In Acanthamoeba polyphaga mimivirus (APMV), this protein is Putative ankyrin repeat protein L25.